The sequence spans 193 residues: FMN-dependent NADH:quinone oxidoreductase 1 (193 aa).

FMN is bound by residues S9, 15–17, and 85–88; these read SIS and MYNF.

The protein belongs to the azoreductase type 1 family. As to quaternary structure, homodimer. Requires FMN as cofactor.

The enzyme catalyses 2 a quinone + NADH + H(+) = 2 a 1,4-benzosemiquinone + NAD(+). The catalysed reaction is N,N-dimethyl-1,4-phenylenediamine + anthranilate + 2 NAD(+) = 2-(4-dimethylaminophenyl)diazenylbenzoate + 2 NADH + 2 H(+). Its function is as follows. Quinone reductase that provides resistance to thiol-specific stress caused by electrophilic quinones. Functionally, also exhibits azoreductase activity. Catalyzes the reductive cleavage of the azo bond in aromatic azo compounds to the corresponding amines. The sequence is that of FMN-dependent NADH:quinone oxidoreductase 1 from Xanthomonas axonopodis pv. citri (strain 306).